The following is a 135-amino-acid chain: ATP synthase epsilon chain (135 aa).

It belongs to the ATPase epsilon chain family. As to quaternary structure, F-type ATPases have 2 components, CF(1) - the catalytic core - and CF(0) - the membrane proton channel. CF(1) has five subunits: alpha(3), beta(3), gamma(1), delta(1), epsilon(1). CF(0) has three main subunits: a, b and c.

It localises to the cell inner membrane. Functionally, produces ATP from ADP in the presence of a proton gradient across the membrane. The chain is ATP synthase epsilon chain from Hyphomonas neptunium (strain ATCC 15444).